We begin with the raw amino-acid sequence, 264 residues long: S-adenosylmethionine decarboxylase proenzyme (264 aa).

S112 serves as the catalytic Schiff-base intermediate with substrate; via pyruvic acid. S112 is modified (pyruvic acid (Ser); by autocatalysis). H117 functions as the Proton acceptor; for processing activity in the catalytic mechanism. C140 acts as the Proton donor; for catalytic activity in catalysis.

The protein belongs to the prokaryotic AdoMetDC family. Type 2 subfamily. As to quaternary structure, heterooctamer of four alpha and four beta chains arranged as a tetramer of alpha/beta heterodimers. Pyruvate is required as a cofactor. In terms of processing, is synthesized initially as an inactive proenzyme. Formation of the active enzyme involves a self-maturation process in which the active site pyruvoyl group is generated from an internal serine residue via an autocatalytic post-translational modification. Two non-identical subunits are generated from the proenzyme in this reaction, and the pyruvate is formed at the N-terminus of the alpha chain, which is derived from the carboxyl end of the proenzyme. The post-translation cleavage follows an unusual pathway, termed non-hydrolytic serinolysis, in which the side chain hydroxyl group of the serine supplies its oxygen atom to form the C-terminus of the beta chain, while the remainder of the serine residue undergoes an oxidative deamination to produce ammonia and the pyruvoyl group blocking the N-terminus of the alpha chain.

It carries out the reaction S-adenosyl-L-methionine + H(+) = S-adenosyl 3-(methylsulfanyl)propylamine + CO2. It functions in the pathway amine and polyamine biosynthesis; S-adenosylmethioninamine biosynthesis; S-adenosylmethioninamine from S-adenosyl-L-methionine: step 1/1. Functionally, catalyzes the decarboxylation of S-adenosylmethionine to S-adenosylmethioninamine (dcAdoMet), the propylamine donor required for the synthesis of the polyamines spermine and spermidine from the diamine putrescine. This Klebsiella pneumoniae (strain 342) protein is S-adenosylmethionine decarboxylase proenzyme.